The chain runs to 218 residues: ATP-dependent dethiobiotin synthetase BioD (218 aa).

9 to 15 contributes to the ATP binding site; that stretch reads TNAGKTT. Threonine 14 lines the Mg(2+) pocket. Lysine 35 is an active-site residue. Lysine 35 contributes to the phosphate binding site. Threonine 39 provides a ligand contact to substrate. ATP contacts are provided by residues aspartate 50, glutamate 116, and 116–119; that span reads EGAG. Mg(2+) is bound by residues aspartate 50 and glutamate 116. Residue 116–119 coordinates phosphate; the sequence is EGAG. 151–154 is a substrate binding site; that stretch reads GLIN. ATP-binding positions include asparagine 175 and 175-177; that span reads NLK.

This sequence belongs to the dethiobiotin synthetase family. Homodimer. Mg(2+) serves as cofactor.

Its subcellular location is the cytoplasm. The catalysed reaction is (7R,8S)-7,8-diammoniononanoate + CO2 + ATP = (4R,5S)-dethiobiotin + ADP + phosphate + 3 H(+). It functions in the pathway cofactor biosynthesis; biotin biosynthesis; biotin from 7,8-diaminononanoate: step 1/2. Its function is as follows. Catalyzes a mechanistically unusual reaction, the ATP-dependent insertion of CO2 between the N7 and N8 nitrogen atoms of 7,8-diaminopelargonic acid (DAPA, also called 7,8-diammoniononanoate) to form a ureido ring. This chain is ATP-dependent dethiobiotin synthetase BioD, found in Helicobacter pylori (strain ATCC 700392 / 26695) (Campylobacter pylori).